The primary structure comprises 162 residues: Transcription elongation factor GreA (162 aa).

Residues 48-76 (NSEYQSAKDEQAFVEGRVKQLQQMIQFAQ) are a coiled coil. The segment at 111–132 (GSAESDPLSGKISNDSPMGKAL) is disordered.

The protein belongs to the GreA/GreB family.

In terms of biological role, necessary for efficient RNA polymerase transcription elongation past template-encoded arresting sites. The arresting sites in DNA have the property of trapping a certain fraction of elongating RNA polymerases that pass through, resulting in locked ternary complexes. Cleavage of the nascent transcript by cleavage factors such as GreA or GreB allows the resumption of elongation from the new 3'terminus. GreA releases sequences of 2 to 3 nucleotides. In Oenococcus oeni (strain ATCC BAA-331 / PSU-1), this protein is Transcription elongation factor GreA.